Here is a 708-residue protein sequence, read N- to C-terminus: Polyribonucleotide nucleotidyltransferase (708 aa).

Mg(2+)-binding residues include aspartate 486 and aspartate 492. One can recognise a KH domain in the interval 553–612 (PRIIKFKINPEKIRDVIGKGGAVIRALTEETGTTIDISDDGSVTIACVSSEGGEQARKRI). An S1 motif domain is found at 622–690 (GRIYEGTVLK…EKGRLRLSMK (69 aa)).

The protein belongs to the polyribonucleotide nucleotidyltransferase family. Requires Mg(2+) as cofactor.

It localises to the cytoplasm. It carries out the reaction RNA(n+1) + phosphate = RNA(n) + a ribonucleoside 5'-diphosphate. In terms of biological role, involved in mRNA degradation. Catalyzes the phosphorolysis of single-stranded polyribonucleotides processively in the 3'- to 5'-direction. The sequence is that of Polyribonucleotide nucleotidyltransferase from Nitrosomonas europaea (strain ATCC 19718 / CIP 103999 / KCTC 2705 / NBRC 14298).